Consider the following 398-residue polypeptide: Thyrotropin-releasing hormone receptor (398 aa).

Residues Met-1–Thr-28 lie on the Extracellular side of the membrane. Residues Asn-3 and Asn-10 are each glycosylated (N-linked (GlcNAc...) asparagine). The chain crosses the membrane as a helical span at residues Ile-29 to Met-51. Residues Arg-52–Asn-61 are Cytoplasmic-facing. Residues Cys-62 to Ile-83 form a helical membrane-spanning segment. Residues Thr-84–Leu-99 lie on the Extracellular side of the membrane. Cysteines 98 and 179 form a disulfide. A helical transmembrane segment spans residues Cys-100–Ile-121. Residues Glu-122–Lys-144 are Cytoplasmic-facing. A helical transmembrane segment spans residues Ile-145–Ile-168. Over Ser-169 to Leu-193 the chain is Extracellular. A helical transmembrane segment spans residues Met-194–Ala-215. The Cytoplasmic portion of the chain corresponds to Arg-216–Lys-266. Residues Met-267–Val-288 form a helical membrane-spanning segment. The Extracellular segment spans residues Asn-289–Phe-296. A helical membrane pass occupies residues Gln-297 to Ile-319. Residues Tyr-320–Ser-398 lie on the Cytoplasmic side of the membrane.

The protein belongs to the G-protein coupled receptor 1 family.

It is found in the cell membrane. Functionally, receptor for thyrotropin-releasing hormone (TRH). Upon ligand binding, this G-protein-coupled receptor triggers activation of the phosphatidylinositol (IP3)-calcium-protein kinase C (PKC) pathway. This is Thyrotropin-releasing hormone receptor (TRHR) from Bos taurus (Bovine).